The sequence spans 153 residues: Ubiquitin/ISG15-conjugating enzyme E2 L6 (153 aa).

Residues 2–149 form the UBC core domain; it reads MASKRVAKEL…AEEFTLKFGV (148 aa). The active-site Glycyl thioester intermediate is the cysteine 86.

The protein belongs to the ubiquitin-conjugating enzyme family. Interacts with RNF19A, RNF19B and RNF144B. Interacts with FLT3 (tyrosine phosphorylated). Post-translationally, ISGylated.

It catalyses the reaction S-ubiquitinyl-[E1 ubiquitin-activating enzyme]-L-cysteine + [E2 ubiquitin-conjugating enzyme]-L-cysteine = [E1 ubiquitin-activating enzyme]-L-cysteine + S-ubiquitinyl-[E2 ubiquitin-conjugating enzyme]-L-cysteine.. The protein operates within protein modification; protein ubiquitination. In terms of biological role, catalyzes the covalent attachment of ubiquitin or ISG15 to other proteins. Functions in the E6/E6-AP-induced ubiquitination of p53/TP53. Promotes ubiquitination and subsequent proteasomal degradation of FLT3. This Mus musculus (Mouse) protein is Ubiquitin/ISG15-conjugating enzyme E2 L6 (Ube2l6).